The primary structure comprises 496 residues: Glycerol kinase (496 aa).

Residue Thr-14 participates in ADP binding. The ATP site is built by Thr-14 and Thr-15. Residue Thr-14 coordinates sn-glycerol 3-phosphate. Sn-glycerol 3-phosphate contacts are provided by Arg-84, Glu-85, Tyr-136, and Asp-246. Residues Arg-84, Glu-85, Tyr-136, Asp-246, and Gln-247 each coordinate glycerol. Residues Thr-268 and Gly-313 each coordinate ADP. Residues Thr-268, Gly-313, Gln-317, and Gly-414 each contribute to the ATP site. ADP contacts are provided by Gly-414 and Asn-418.

This sequence belongs to the FGGY kinase family.

It carries out the reaction glycerol + ATP = sn-glycerol 3-phosphate + ADP + H(+). It functions in the pathway polyol metabolism; glycerol degradation via glycerol kinase pathway; sn-glycerol 3-phosphate from glycerol: step 1/1. With respect to regulation, inhibited by fructose 1,6-bisphosphate (FBP). In terms of biological role, key enzyme in the regulation of glycerol uptake and metabolism. Catalyzes the phosphorylation of glycerol to yield sn-glycerol 3-phosphate. The protein is Glycerol kinase of Myxococcus xanthus (strain DK1622).